A 167-amino-acid polypeptide reads, in one-letter code: HVA22-like protein b (167 aa).

The next 3 helical transmembrane spans lie at 18 to 38, 47 to 67, and 68 to 88; these read VIAG…RAIE, QWLT…TFFR, and LLEW…WLVL.

It belongs to the DP1 family. In terms of tissue distribution, predominantly expressed in flower buds.

The protein resides in the membrane. This Arabidopsis thaliana (Mouse-ear cress) protein is HVA22-like protein b (HVA22B).